The sequence spans 205 residues: Imidazole glycerol phosphate synthase subunit HisH (205 aa).

A Glutamine amidotransferase type-1 domain is found at 1–205; the sequence is MVGIVNYNIG…RILKNFCEIG (205 aa). Cys-79 acts as the Nucleophile in catalysis. Active-site residues include His-186 and Glu-188.

As to quaternary structure, heterodimer of HisH and HisF.

The protein localises to the cytoplasm. It carries out the reaction 5-[(5-phospho-1-deoxy-D-ribulos-1-ylimino)methylamino]-1-(5-phospho-beta-D-ribosyl)imidazole-4-carboxamide + L-glutamine = D-erythro-1-(imidazol-4-yl)glycerol 3-phosphate + 5-amino-1-(5-phospho-beta-D-ribosyl)imidazole-4-carboxamide + L-glutamate + H(+). The catalysed reaction is L-glutamine + H2O = L-glutamate + NH4(+). Its pathway is amino-acid biosynthesis; L-histidine biosynthesis; L-histidine from 5-phospho-alpha-D-ribose 1-diphosphate: step 5/9. Its function is as follows. IGPS catalyzes the conversion of PRFAR and glutamine to IGP, AICAR and glutamate. The HisH subunit catalyzes the hydrolysis of glutamine to glutamate and ammonia as part of the synthesis of IGP and AICAR. The resulting ammonia molecule is channeled to the active site of HisF. The protein is Imidazole glycerol phosphate synthase subunit HisH of Wolinella succinogenes (strain ATCC 29543 / DSM 1740 / CCUG 13145 / JCM 31913 / LMG 7466 / NCTC 11488 / FDC 602W) (Vibrio succinogenes).